The chain runs to 277 residues: Uridine-cytidine kinase 1 (277 aa).

Residues 1 to 30 (MASAGGGGSESAAPEADRPQPRPFLIGVSG) are disordered. 30 to 38 (GGTASGKST) is an ATP binding site. Positions 87, 115, 120, 169, 178, and 186 each coordinate substrate. Position 215 (D215) interacts with ATP. The segment covering 238–250 (RHRGGPNGRNHKR) has biased composition (basic residues). Residues 238-277 (RHRGGPNGRNHKRTFPEPGDHPGVLATGKRSHLESSSRPH) are disordered. Position 251 is a phosphothreonine (T251). Basic and acidic residues predominate over residues 268-277 (SHLESSSRPH).

The protein belongs to the uridine kinase family.

The catalysed reaction is uridine + ATP = UMP + ADP + H(+). It catalyses the reaction cytidine + ATP = CMP + ADP + H(+). It participates in pyrimidine metabolism; CTP biosynthesis via salvage pathway; CTP from cytidine: step 1/3. Its pathway is pyrimidine metabolism; UMP biosynthesis via salvage pathway; UMP from uridine: step 1/1. Functionally, phosphorylates uridine and cytidine to uridine monophosphate and cytidine monophosphate. Does not phosphorylate deoxyribonucleosides or purine ribonucleosides. Can use ATP or GTP as a phosphate donor. This chain is Uridine-cytidine kinase 1 (Uck1), found in Mus musculus (Mouse).